Consider the following 44-residue polypeptide: Photosystem I reaction center subunit IX (44 aa).

The helical transmembrane segment at 7–27 (YLSVAPVLTTLWFGSLAGLLI) threads the bilayer.

Belongs to the PsaJ family.

The protein localises to the plastid. Its subcellular location is the chloroplast thylakoid membrane. Functionally, may help in the organization of the PsaE and PsaF subunits. This is Photosystem I reaction center subunit IX from Nymphaea alba (White water-lily).